The sequence spans 150 residues: Large ribosomal subunit protein bL9 (150 aa).

This sequence belongs to the bacterial ribosomal protein bL9 family.

Binds to the 23S rRNA. The sequence is that of Large ribosomal subunit protein bL9 from Neisseria gonorrhoeae (strain ATCC 700825 / FA 1090).